Consider the following 1365-residue polypeptide: DNA-directed RNA polymerase subunit beta'' (1365 aa).

Residues Cys224, Cys295, Cys302, and Cys305 each contribute to the Zn(2+) site.

It belongs to the RNA polymerase beta' chain family. RpoC2 subfamily. In terms of assembly, in plastids the minimal PEP RNA polymerase catalytic core is composed of four subunits: alpha, beta, beta', and beta''. When a (nuclear-encoded) sigma factor is associated with the core the holoenzyme is formed, which can initiate transcription. The cofactor is Zn(2+).

Its subcellular location is the plastid. The protein resides in the chloroplast. It catalyses the reaction RNA(n) + a ribonucleoside 5'-triphosphate = RNA(n+1) + diphosphate. In terms of biological role, DNA-dependent RNA polymerase catalyzes the transcription of DNA into RNA using the four ribonucleoside triphosphates as substrates. In Fagopyrum esculentum subsp. ancestrale (Wild buckwheat), this protein is DNA-directed RNA polymerase subunit beta''.